The chain runs to 2731 residues: Teneurin-1 (2731 aa).

The disordered stretch occupies residues 1–72 (MEQTDCKPYQ…KRKDVEKSTQ (72 aa)). The Teneurin N-terminal domain occupies 1–318 (MEQTDCKPYQ…KPYRCCNWKC (318 aa)). Residues 1 to 324 (MEQTDCKPYQ…NWKCTALSAT (324 aa)) are Cytoplasmic-facing. A compositionally biased stretch (basic and acidic residues) spans 44–55 (ETLHEYNQELRR). The Nuclear localization signal (NLS) motif lies at 62 to 65 (RKRK). The residue at position 105 (S105) is a Phosphoserine. The residue at position 109 (T109) is a Phosphothreonine. Residue S116 is modified to Phosphoserine. The tract at residues 175–241 (DSAQDMQSSP…PAPPTSTQDS (67 aa)) is disordered. The span at 178–189 (QDMQSSPHNQFT) shows a compositional bias: polar residues. Residues 192–201 (PLPPPPPPPH) show a composition bias toward pro residues. Residues 214–224 (DSLQRRSMTTR) show a composition bias toward polar residues. The Required for interaction with SORBS1 (Ten-1 ICD form) signature appears at 290-297 (PPPRPLPR). The chain crosses the membrane as a helical span at residues 325–345 (AITVTLALLLAYVIAVHLFGL). Residues 346 to 2731 (TWQLQPVGQI…FMRQSEIGRR (2386 aa)) are Extracellular-facing. N-linked (GlcNAc...) asparagine glycosylation occurs at N432. 8 consecutive EGF-like domains span residues 527 to 558 (IMDD…PDCA), 559 to 590 (RDSC…ECDV), 591 to 623 (PEEQ…EICE), 624 to 656 (EEDC…NCET), 657 to 690 (PLPI…SDCS), 691 to 720 (TELC…GPTC), 721 to 752 (EERS…DHCT), and 760 to 795 (VRDG…TGCN). 22 cysteine pairs are disulfide-bonded: C531-C541, C535-C546, C548-C557, C566-C577, C579-C588, C595-C606, C600-C611, C613-C622, C627-C638, C632-C643, C645-C654, C665-C678, C680-C689, C694-C704, C698-C709, C711-C720, C725-C735, C729-C740, C742-C751, C764-C774, C768-C783, and C785-C794. N-linked (GlcNAc...) asparagine glycosylation is found at N904 and N1083. 5 NHL repeats span residues 1193–1218 (LFAP…VRRI), 1298–1342 (SHCG…NAVI), 1357–1408 (LSCD…IAGR), 1420–1464 (FLVS…VTTN), and 1487–1530 (CFSG…ISKN). The stretch at 1540 to 1559 (YEIASPADQELYQFTVNGTH) is one YD 1 repeat. N-linked (GlcNAc...) asparagine glycosylation is found at N1556 and N1573. YD repeat units follow at residues 1576–1596 (YNAE…VHIR), 1614–1638 (YWLT…ALMT), 1639–1660 (YPGN…TVYE), and 1661–1681 (YDPE…SSFH). 6 N-linked (GlcNAc...) asparagine glycosylation sites follow: N1669, N1705, N1743, N1763, N1787, and N1848. YD repeat units lie at residues 1851–1870 (YSPS…EKME), 1871–1891 (YDQS…WSYT), 1892–1910 (YLEK…YIFE), 1911–1931 (YDQS…HSLQ), 1939–1955 (YRNI…FIQD), 1956–1975 (YSRD…RRVL), 1976–1995 (YKYT…TQVT), 1998–2018 (YEES…FICT), 2021–2041 (YRQT…EGLV), 2091–2111 (YDLN…FNAN), and 2119–2139 (YEIL…MGRM). N-linked (GlcNAc...) asparagine glycosylation occurs at N2151. YD repeat units lie at residues 2159–2179 (YDAD…WRYS), 2180–2200 (YDLN…LTPL), 2202–2222 (YDLR…DEDG), 2234–2254 (YNSN…TVQY), and 2256–2276 (YDGL…LQFF). N-linked (GlcNAc...) asparagine glycosylation occurs at N2291. 2 YD repeats span residues 2302–2319 (YDLQ…GEEY) and 2320–2343 (YVAC…IKEI). S2586 is subject to Phosphoserine. The N-linked (GlcNAc...) asparagine glycan is linked to N2608.

It belongs to the tenascin family. Teneurin subfamily. Homodimer; disulfide-linked. Heterodimer with either TENM2 or TENM3. May also form heterodimer with TENM4. Ten-1 ICD interacts with SORBS1 (via third SH3 domain). Interacts with MBD1 isoform 2. Ten-1 ICD interacts with HINT1. Once secreted, may also be cleaved to give rise to the TCAP-1 form. In terms of processing, derives from the plasma membrane form by proteolytic processing. Further proteolytic cleavage may generate 11.9 and 4.7 kDa bioactive peptides. Isoform 1 and isoform 2 are expressed in the brain. Isoform 2 is expressed in the granular layer of the dentate gyrus and the pyramidal layer (Py) of the CA1, CA2 and CA3 of the hippocampus (at protein level). Expressed in the cortex, thalamus, CA1, CA2, CA3, dentate gyrus and granular layer of the hippocampus. Weakly expressed in kidney, testis and lung.

It localises to the cell membrane. The protein resides in the cytoplasm. It is found in the secreted. Its subcellular location is the nucleus. The protein localises to the nucleus speckle. It localises to the nucleus matrix. The protein resides in the cytoskeleton. In terms of biological role, involved in neural development, regulating the establishment of proper connectivity within the nervous system. May function as a cellular signal transducer. Its function is as follows. Plays a role in the regulation of neuroplasticity in the limbic system. Mediates a rapid reorganization of actin- and tubulin-based cytoskeleton elements with an increase in dendritic arborization and spine density formation of neurons in the hippocampus and amygdala. Induces BDNF transcription inhibition in neurons. Activates the mitogen-activated protein (MAP) kinase 2 (MEK2) and extracellular signal-regulated kinase (ERK) cascade. Also acts as a bioactive neuroprotective peptide on limbic neurons of the brain and regulates stress-induced behavior: attenuates alkalosis-associated necrotic cell death and the effects of corticotropin-releasing factor (CRF) on c-fos/FOS induction and on the reinstatement of cocaine seeking. Functionally, induces gene transcription activation. This is Teneurin-1 (Tenm1) from Mus musculus (Mouse).